A 1051-amino-acid polypeptide reads, in one-letter code: DNA-directed RNA polymerase subunit beta (1051 aa).

The protein belongs to the RNA polymerase beta chain family. As to quaternary structure, in plastids the minimal PEP RNA polymerase catalytic core is composed of four subunits: alpha, beta, beta', and beta''. When a (nuclear-encoded) sigma factor is associated with the core the holoenzyme is formed, which can initiate transcription (Potential).

The protein resides in the plastid. The protein localises to the apicoplast. It catalyses the reaction RNA(n) + a ribonucleoside 5'-triphosphate = RNA(n+1) + diphosphate. In terms of biological role, DNA-dependent RNA polymerase catalyzes the transcription of DNA into RNA using the four ribonucleoside triphosphates as substrates. This chain is DNA-directed RNA polymerase subunit beta (rpoB), found in Toxoplasma gondii.